The following is a 77-amino-acid chain: UPF0291 protein OB1671 (77 aa).

Positions 56 to 77 are disordered; the sequence is DPEGKDVTPQKLRDYQDRNKKH. Residues 57–77 are compositionally biased toward basic and acidic residues; the sequence is PEGKDVTPQKLRDYQDRNKKH.

The protein belongs to the UPF0291 family.

It is found in the cytoplasm. This is UPF0291 protein OB1671 from Oceanobacillus iheyensis (strain DSM 14371 / CIP 107618 / JCM 11309 / KCTC 3954 / HTE831).